Consider the following 465-residue polypeptide: Kynureninase (465 aa).

An N-acetylmethionine modification is found at Met1. Pyridoxal 5'-phosphate-binding positions include Leu137, Thr138, 165-168 (FPSD), Ser221, Asp250, His253, and Tyr275. Lys276 bears the N6-(pyridoxal phosphate)lysine mark. Positions 305 and 333 each coordinate pyridoxal 5'-phosphate.

The protein belongs to the kynureninase family. In terms of assembly, homodimer. Pyridoxal 5'-phosphate is required as a cofactor. Expressed in all tissues tested (heart, brain placenta, lung, liver, skeletal muscle, kidney and pancreas). Highest levels found in placenta, liver and lung. Expressed in all brain regions.

The protein localises to the cytoplasm. Its subcellular location is the cytosol. The enzyme catalyses L-kynurenine + H2O = anthranilate + L-alanine + H(+). It carries out the reaction 3-hydroxy-L-kynurenine + H2O = 3-hydroxyanthranilate + L-alanine + H(+). The protein operates within amino-acid degradation; L-kynurenine degradation; L-alanine and anthranilate from L-kynurenine: step 1/1. It participates in cofactor biosynthesis; NAD(+) biosynthesis; quinolinate from L-kynurenine: step 2/3. Its activity is regulated as follows. Inhibited by o-methoxybenzoylalanine (OMBA). Its function is as follows. Catalyzes the cleavage of L-kynurenine (L-Kyn) and L-3-hydroxykynurenine (L-3OHKyn) into anthranilic acid (AA) and 3-hydroxyanthranilic acid (3-OHAA), respectively. Has a preference for the L-3-hydroxy form. Also has cysteine-conjugate-beta-lyase activity. This Homo sapiens (Human) protein is Kynureninase.